We begin with the raw amino-acid sequence, 417 residues long: RH-like protein IA (417 aa).

11 consecutive transmembrane segments (helical) span residues 12–32 (CLPL…YFFT), 44–64 (LVAS…GFGF), 77–97 (VAFS…LDGF), 125–145 (ISVD…MVLV), 172–192 (IYVF…KPLP), 203–223 (TIPS…WPSF), 238–258 (VFNT…GSSL), 265–285 (ISMS…GTSC), 287–307 (LITS…ISIG), 331–351 (NFSL…VHHT), and 358–378 (MIGF…TIAL).

This sequence belongs to the ammonium transporter (TC 2.A.49) family. Rh subfamily.

It is found in the membrane. Its function is as follows. May be part of an oligomeric complex which is likely to have a transport or channel function in the erythrocyte membrane. The protein is RH-like protein IA of Pan troglodytes (Chimpanzee).